Consider the following 142-residue polypeptide: U1 small nuclear ribonucleoprotein C (142 aa).

The Matrin-type zinc finger occupies 4–36; it reads YYCDYCDTFLTHDSPSVRKTHNGGRKHKDNVRM.

It belongs to the U1 small nuclear ribonucleoprotein C family. As to quaternary structure, U1 snRNP is composed of the 7 core Sm proteins B/B', D1, D2, D3, E, F and G that assemble in a heptameric protein ring on the Sm site of the small nuclear RNA to form the core snRNP, and at least 3 U1 snRNP-specific proteins U1-70K, U1-A and U1-C. U1-C interacts with U1 snRNA and the 5' splice-site region of the pre-mRNA.

The protein localises to the nucleus. In terms of biological role, component of the spliceosomal U1 snRNP, which is essential for recognition of the pre-mRNA 5' splice-site and the subsequent assembly of the spliceosome. U1-C is directly involved in initial 5' splice-site recognition for both constitutive and regulated alternative splicing. The interaction with the 5' splice-site seems to precede base-pairing between the pre-mRNA and the U1 snRNA. Stimulates commitment or early (E) complex formation by stabilizing the base pairing of the 5' end of the U1 snRNA and the 5' splice-site region. The chain is U1 small nuclear ribonucleoprotein C from Caenorhabditis briggsae.